We begin with the raw amino-acid sequence, 888 residues long: Alanine--tRNA ligase (888 aa).

4 residues coordinate Zn(2+): His-573, His-577, Cys-676, and His-680.

This sequence belongs to the class-II aminoacyl-tRNA synthetase family. Requires Zn(2+) as cofactor.

It localises to the cytoplasm. The catalysed reaction is tRNA(Ala) + L-alanine + ATP = L-alanyl-tRNA(Ala) + AMP + diphosphate. Catalyzes the attachment of alanine to tRNA(Ala) in a two-step reaction: alanine is first activated by ATP to form Ala-AMP and then transferred to the acceptor end of tRNA(Ala). Also edits incorrectly charged Ser-tRNA(Ala) and Gly-tRNA(Ala) via its editing domain. The polypeptide is Alanine--tRNA ligase (Corynebacterium glutamicum (strain R)).